A 288-amino-acid polypeptide reads, in one-letter code: UPF0761 membrane protein HS_0693 (288 aa).

The next 6 helical transmembrane spans lie at 36–56, 92–112, 127–147, 176–196, 200–220, and 240–260; these read TLAL…FPVF, QMSA…IHSI, PAIF…IVIA, LLSL…YMVV, KVSI…FTLG, and AMAT…AVLL.

The protein belongs to the UPF0761 family.

The protein resides in the cell inner membrane. The polypeptide is UPF0761 membrane protein HS_0693 (Histophilus somni (strain 129Pt) (Haemophilus somnus)).